The following is a 134-amino-acid chain: MILSDEKCDFLESIASFLGPKDVELVFVDSKEMQEINLEQRKQDKTTDVLSFPLENIDESLPLGSVVINVDLAKEKAKELGHSYEEEISLLFIHAMLHLLGFDHENDNGEMREKEKELIEYFNLPKSLIVRTLG.

Zn(2+)-binding residues include His94, His98, and His104.

Belongs to the endoribonuclease YbeY family. Zn(2+) is required as a cofactor.

The protein localises to the cytoplasm. Its function is as follows. Single strand-specific metallo-endoribonuclease involved in late-stage 70S ribosome quality control and in maturation of the 3' terminus of the 16S rRNA. The polypeptide is Endoribonuclease YbeY (Campylobacter jejuni subsp. jejuni serotype O:23/36 (strain 81-176)).